The chain runs to 396 residues: Tryptophan synthase beta chain 1 (396 aa).

At Lys-86 the chain carries N6-(pyridoxal phosphate)lysine.

It belongs to the TrpB family. In terms of assembly, tetramer of two alpha and two beta chains. Pyridoxal 5'-phosphate is required as a cofactor.

It carries out the reaction (1S,2R)-1-C-(indol-3-yl)glycerol 3-phosphate + L-serine = D-glyceraldehyde 3-phosphate + L-tryptophan + H2O. It functions in the pathway amino-acid biosynthesis; L-tryptophan biosynthesis; L-tryptophan from chorismate: step 5/5. Functionally, the beta subunit is responsible for the synthesis of L-tryptophan from indole and L-serine. This is Tryptophan synthase beta chain 1 (trpB1) from Vibrio parahaemolyticus serotype O3:K6 (strain RIMD 2210633).